We begin with the raw amino-acid sequence, 303 residues long: Vacuolar protein sorting-associated protein 26B (303 aa).

It belongs to the VPS26 family. As to quaternary structure, component of the retromer complex which consists of VPS29 (MAG1), VPS26 (VPS26A or VPS26B), VPS35 (VPS35A or VPS35B or VPS35C), VPS5/17 (SNX1 or SNX2A or SNX2B). Component of a retromer subcomplex consisting of VPS29 (MAG1), VPS26 (VPS26A or VPS26B), VPS35 (VPS35A or VPS35B or VPS35C).

It is found in the cytoplasm. It localises to the endosome membrane. The protein resides in the prevacuolar compartment membrane. The protein localises to the golgi apparatus. Its subcellular location is the trans-Golgi network membrane. Functionally, plays a role in vesicular protein sorting. Component of the membrane-associated retromer complex which is essential in endosome-to-Golgi retrograde transport. The VPS29-VPS26-VPS35 subcomplex may be involved in recycling of specific cargos from endosome to the plasma membrane. The sequence is that of Vacuolar protein sorting-associated protein 26B (VPS26B) from Arabidopsis thaliana (Mouse-ear cress).